We begin with the raw amino-acid sequence, 577 residues long: Cleavage stimulation factor subunit 2 (577 aa).

Ser14 bears the Phosphoserine mark. Residues 16–94 enclose the RRM domain; the sequence is RSVFVGNIPY…RALRVDNAAS (79 aa). An interactions with CSTF3 and SYMPK region spans residues 108–248; the sequence is APVIESPYGE…VNGAPPLMQA (141 aa). Residue Lys189 forms a Glycyl lysine isopeptide (Lys-Gly) (interchain with G-Cter in SUMO2) linkage. A disordered region spans residues 207–230; it reads PVHGAGPGSGSNVSMNQQNPQAPQ. At Arg308 the chain carries Omega-N-methylarginine. Positions 319–409 are disordered; that stretch reads RGLLGDAPND…DGRGGRDPRG (91 aa). Residues 360–373 are compositionally biased toward basic and acidic residues; the sequence is PGHESRGPPPHELR. Residues 410 to 414 form a 1; approximate repeat; the sequence is IDARG. Residues 410-469 are 12 X 5 AA tandem repeats of M-E-A-R-[AG]; it reads IDARGMEARAMEARGLDARGLEARAMEARAMEARAMEARAMEARAMEVRGMEARGMDTRG. Tandem repeats lie at residues 415 to 419 and 420 to 424. A 4; approximate repeat occupies 425–429; it reads LDARG. The stretch at 430–434 is one 5; approximate repeat; the sequence is LEARA. 4 consecutive repeat copies span residues 435-439, 440-444, 445-449, and 450-454. One copy of the 10; approximate repeat lies at 455 to 459; it reads MEVRG. Residues 460 to 464 form repeat 11; the sequence is MEARG. Residues 465–469 form a 12; approximate repeat; the sequence is MDTRG. Omega-N-methylarginine is present on residues Arg468 and Arg475. The interval 509–532 is disordered; sequence LQGASIQGGSQPGGFSPGQNQVTP. Residues 514–577 form an interaction with RPO2TC1 region; sequence IQGGSQPGGF…EQIQKSTGAP (64 aa). Ser518 and Ser524 each carry phosphoserine.

The CSTF complex is composed of CSTF1 (50 kDa subunit), CSTF2 (64 kDa subunit) and CSTF3 (77 kDa subunit). CSTF2 directly interacts with CSTF3, SYMPK and RPO2TC1. Interacts with HSF1 in heat-stressed cells. Interacts with CPSF2, CPSF3 and FIP1L1. Interacts with DDX1.

It localises to the nucleus. Functionally, one of the multiple factors required for polyadenylation and 3'-end cleavage of mammalian pre-mRNAs. This subunit is directly involved in the binding to pre-mRNAs. This Pongo abelii (Sumatran orangutan) protein is Cleavage stimulation factor subunit 2 (CSTF2).